Consider the following 133-residue polypeptide: Small ribosomal subunit protein uS11 (133 aa).

A disordered region spans residues 1–22; it reads MPPKTRGAVRKPRKKDKKNIAL. Residues 7-17 show a composition bias toward basic residues; the sequence is GAVRKPRKKDK.

Belongs to the universal ribosomal protein uS11 family. In terms of assembly, part of the 30S ribosomal subunit. Interacts with proteins S7 and S18. Binds to IF-3.

In terms of biological role, located on the platform of the 30S subunit, it bridges several disparate RNA helices of the 16S rRNA. Forms part of the Shine-Dalgarno cleft in the 70S ribosome. The polypeptide is Small ribosomal subunit protein uS11 (Renibacterium salmoninarum (strain ATCC 33209 / DSM 20767 / JCM 11484 / NBRC 15589 / NCIMB 2235)).